Reading from the N-terminus, the 256-residue chain is MLHIADKTFASHLFTGTGKFASSQLMVEAIRACGSQLVTLAMKRVDLRQHNDAILEPLIAAGVTLLPNTSGAKTAEEAIFAAHLAREALGTNWLKLEIHPDARWLLPDPIETLKAAETLVQQGFIVLPYCGADPVLCKRLEEVGCAAVMPLGAPIGSNQGLETRAMLEIIIQQATVPVVVDAGIGVPSHAAQALEMGADAVLVNTAIAVADDPVNMAKAFRLAVEAGLLARQSGPGSRSHFAHATSPLTGFLEASA.

Lysine 95 acts as the Schiff-base intermediate with DXP in catalysis. 1-deoxy-D-xylulose 5-phosphate-binding positions include glycine 156, 182–183 (AG), and 204–205 (NT).

It belongs to the ThiG family. As to quaternary structure, homotetramer. Forms heterodimers with either ThiH or ThiS.

It localises to the cytoplasm. The enzyme catalyses [ThiS sulfur-carrier protein]-C-terminal-Gly-aminoethanethioate + 2-iminoacetate + 1-deoxy-D-xylulose 5-phosphate = [ThiS sulfur-carrier protein]-C-terminal Gly-Gly + 2-[(2R,5Z)-2-carboxy-4-methylthiazol-5(2H)-ylidene]ethyl phosphate + 2 H2O + H(+). It participates in cofactor biosynthesis; thiamine diphosphate biosynthesis. Functionally, catalyzes the rearrangement of 1-deoxy-D-xylulose 5-phosphate (DXP) to produce the thiazole phosphate moiety of thiamine. Sulfur is provided by the thiocarboxylate moiety of the carrier protein ThiS. In vitro, sulfur can be provided by H(2)S. The sequence is that of Thiazole synthase from Escherichia coli O81 (strain ED1a).